Reading from the N-terminus, the 155-residue chain is Ribosomal RNA large subunit methyltransferase H (155 aa).

Residues Leu-73, Gly-104, and 123-128 (LSPLTL) each bind S-adenosyl-L-methionine.

Belongs to the RNA methyltransferase RlmH family. Homodimer.

Its subcellular location is the cytoplasm. The catalysed reaction is pseudouridine(1915) in 23S rRNA + S-adenosyl-L-methionine = N(3)-methylpseudouridine(1915) in 23S rRNA + S-adenosyl-L-homocysteine + H(+). Functionally, specifically methylates the pseudouridine at position 1915 (m3Psi1915) in 23S rRNA. The sequence is that of Ribosomal RNA large subunit methyltransferase H from Pseudomonas entomophila (strain L48).